A 287-amino-acid chain; its full sequence is Bifunctional protein FolD (287 aa).

NADP(+) is bound by residues 165–167 (GRS), S190, and I231.

This sequence belongs to the tetrahydrofolate dehydrogenase/cyclohydrolase family. Homodimer.

It catalyses the reaction (6R)-5,10-methylene-5,6,7,8-tetrahydrofolate + NADP(+) = (6R)-5,10-methenyltetrahydrofolate + NADPH. The catalysed reaction is (6R)-5,10-methenyltetrahydrofolate + H2O = (6R)-10-formyltetrahydrofolate + H(+). It functions in the pathway one-carbon metabolism; tetrahydrofolate interconversion. Catalyzes the oxidation of 5,10-methylenetetrahydrofolate to 5,10-methenyltetrahydrofolate and then the hydrolysis of 5,10-methenyltetrahydrofolate to 10-formyltetrahydrofolate. The polypeptide is Bifunctional protein FolD (Carboxydothermus hydrogenoformans (strain ATCC BAA-161 / DSM 6008 / Z-2901)).